Reading from the N-terminus, the 186-residue chain is ATP synthase subunit delta (186 aa).

Belongs to the ATPase delta chain family. As to quaternary structure, F-type ATPases have 2 components, F(1) - the catalytic core - and F(0) - the membrane proton channel. F(1) has five subunits: alpha(3), beta(3), gamma(1), delta(1), epsilon(1). CF(0) has four main subunits: a(1), b(1), b'(1) and c(10-14). The alpha and beta chains form an alternating ring which encloses part of the gamma chain. F(1) is attached to F(0) by a central stalk formed by the gamma and epsilon chains, while a peripheral stalk is formed by the delta, b and b' chains.

Its subcellular location is the cell inner membrane. Functionally, f(1)F(0) ATP synthase produces ATP from ADP in the presence of a proton or sodium gradient. F-type ATPases consist of two structural domains, F(1) containing the extramembraneous catalytic core and F(0) containing the membrane proton channel, linked together by a central stalk and a peripheral stalk. During catalysis, ATP synthesis in the catalytic domain of F(1) is coupled via a rotary mechanism of the central stalk subunits to proton translocation. In terms of biological role, this protein is part of the stalk that links CF(0) to CF(1). It either transmits conformational changes from CF(0) to CF(1) or is implicated in proton conduction. The sequence is that of ATP synthase subunit delta from Dinoroseobacter shibae (strain DSM 16493 / NCIMB 14021 / DFL 12).